Here is a 793-residue protein sequence, read N- to C-terminus: MADAWEEIRRLAADFQRAQFAEATQRLSERNCIEIVNKLIAQKQLEVVHTLDGKEYITPAQISKEMRDELHVRGGRVNIVDLQQVINVDLIHIENRIGDIIKSEKHVQLVLGQLIDENYLDRLAEEVNDKLQESGQVTISELCKTYDLPGNFLTQALTQRLGRIISGHIDLDNRGVIFTEAFVARHKARIRGLFSAITRPTAVNSLISKYGFQEQLLYSVLEELVNSGRLRGTVVGGRQDKAVFVPDIYSRTQSTWVDSFFRQNGYLEFDALSRLGIPDAVSYIKKRYKTTQLLFLKAACVGQGLVDQVEASVEEAISSGTWVDIAPLLPTSLSVEDAAILLQQVMRAFSKQASAVVFSDTVVVSEKFINDCTELFRELMHQKAEKEMKNNPVHLITEEDLKQISTLESVSTSKKDKKDERRRKATEGSGSVRGGGGGNAREYKIRKVKKKGRKDDDSDDETQSSHTGKKKPEISFMFQDEIEDFLRKHIQDAPEEFISELAEYLIKPLNKTYLEVVRSVFMSSTTSASGTGRKRTIKDLQEEVSNLYNNIRLFEKGMKFFADDTQAALTKHLLKSVCTDITNLIFNFLASDLMMAVDDPAAITSEIRKKILSKLSEETKVALTKLHNSLNEKSIEDFISCLDSAAEACDIMVKRGDKKRERQILFQHRQALAEQLKVTEDPALILHLTSVLLFQFSTHTMLHAPGRCVPQIIAFLNSKIPEDQHALLVKYQGLVVKQLVSQNKKTGQGDYPLNNELGKEQEDVANTRKELQELSSSIKDLVLKSRKSSVTEE.

At A2 the chain carries N-acetylalanine. The mediates interaction with DDRGK1 stretch occupies residues A2–P200. Positions A2–F212 are required for E3 UFM1-protein ligase activity. An involved in CDK5RAP3-binding region spans residues D121–S250. The segment at P200–D400 is mediates interaction with TRIP4. A disordered region spans residues L407–E473. R433 bears the Omega-N-methylarginine mark. S458 bears the Phosphoserine mark. Positions I490–L684 are mediates interaction with CDK5RAP3. A Phosphothreonine modification is found at T536.

It belongs to the UFL1 family. As to quaternary structure, catalytic component of the UFM1 ribosome E3 ligase (UREL) complex, composed of UFL1, DDRGK1 and CDK5RAP3. Interacts with E2-like enzyme UFC1. Interacts with RELA. Interacts with NBN; promoting recruitment to double-strand breaks following DNA damage. Interacts (when phosphorylated) with YWHAG/14-3-3-gamma; sequestering UFL1 and preventing its association with PDCD1/PD-1 substrate. Ubiquitinated, leading to its degradation by the proteasome. Interaction with CDK5RAP3 protects both proteins against ubiquitination and degradation via the proteasome. In terms of processing, phosphorylation at Thr-536 by AMPK promotes its interaction with YWHAG/14-3-3-gamma, thereby preventing UFL1 association with PDCD1/PD-1 substrate.

It is found in the endoplasmic reticulum membrane. Its subcellular location is the cytoplasm. The protein resides in the cytosol. It localises to the nucleus. The protein localises to the chromosome. Its function is as follows. E3 protein ligase that mediates ufmylation, the covalent attachment of the ubiquitin-like modifier UFM1 to lysine residues on target proteins, and which plays a key role in various processes, such as ribosome recycling, response to DNA damage, interferon response or reticulophagy (also called ER-phagy). Catalyzes ufmylation of many protein, such as CD274/PD-L1, CDK5RAP3, CYB5R3, DDRGK1, EIF6, histone H4, MRE11, P4HB, PDCD1/PD-1, TRIP4, RPN1, RPS20/uS10, RPL10/uL16, RPL26/uL24, SYVN1/HRD1 and TP53/p53. As part of the UREL complex, plays a key role in ribosome recycling by catalyzing mono-ufmylation of RPL26/uL24 subunit of the 60S ribosome. Ufmylation of RPL26/uL24 occurs on free 60S ribosomes following ribosome dissociation: it weakens the junction between post-termination 60S subunits and SEC61 translocons, promoting release and recycling of the large ribosomal subunit from the endoplasmic reticulum membrane. Ufmylation of RPL26/uL24 and subsequent 60S ribosome recycling either take place after normal termination of translation or after ribosome stalling during cotranslational translocation at the endoplasmic reticulum. Involved in reticulophagy in response to endoplasmic reticulum stress by mediating ufmylation of proteins such as CYB5R3 and RPN1, thereby promoting lysosomal degradation of ufmylated proteins. Ufmylation in response to endoplasmic reticulum stress is essential for processes such as hematopoiesis, blood vessel morphogenesis or inflammatory response. Mediates ufmylation of DDRGK1 and CDK5RAP3; the role of these modifications is however unclear: as both DDRGK1 and CDK5RAP3 act as substrate adapters for ufmylation, it is uncertain whether ufmylation of these proteins is, a collateral effect or is required for ufmylation. Acts as a negative regulator of T-cell activation by mediating ufmylation and stabilization of PDCD1/PD-1. Also involved in the response to DNA damage: recruited to double-strand break sites following DNA damage and mediates monoufmylation of histone H4 and ufmylation of MRE11. Mediates ufmylation of TP53/p53, promoting its stability. Catalyzes ufmylation of TRIP4, thereby playing a role in nuclear receptor-mediated transcription. Required for hematopoietic stem cell function and hematopoiesis. This is E3 UFM1-protein ligase 1 from Macaca fascicularis (Crab-eating macaque).